Consider the following 228-residue polypeptide: Ribulose-phosphate 3-epimerase (228 aa).

A substrate-binding site is contributed by Ser12. Residues His37, Asp39, and His70 each coordinate a divalent metal cation. The Proton acceptor role is filled by Asp39. Residues His70, 146–149, 176–178, and 198–199 each bind substrate; these read GFGG, DGG, and GS. Position 176 (Asp176) interacts with a divalent metal cation. The Proton donor role is filled by Asp176.

The protein belongs to the ribulose-phosphate 3-epimerase family. A divalent metal cation is required as a cofactor.

The enzyme catalyses D-ribulose 5-phosphate = D-xylulose 5-phosphate. Its pathway is carbohydrate degradation. Its function is as follows. Catalyzes the reversible epimerization of D-ribulose 5-phosphate to D-xylulose 5-phosphate. This Rhodobacter capsulatus (Rhodopseudomonas capsulata) protein is Ribulose-phosphate 3-epimerase.